Consider the following 590-residue polypeptide: Beta-glucosidase 29 (590 aa).

An N-terminal signal peptide occupies residues 1-21 (MNVQIFILLLIISWLTPKITS). Residues Gln48, His151, and 196-197 (NE) each bind a beta-D-glucoside. Catalysis depends on Glu197, which acts as the Proton donor. A disulfide bridge links Cys216 with Cys224. N-linked (GlcNAc...) asparagine glycans are attached at residues Asn255 and Asn331. Tyr341 contributes to the a beta-D-glucoside binding site. Asn371 carries N-linked (GlcNAc...) asparagine glycosylation. A beta-D-glucoside contacts are provided by residues Glu413, Trp463, 470–471 (EW), and Phe479. The Nucleophile role is filled by Glu413. Asn522 and Asn553 each carry an N-linked (GlcNAc...) asparagine glycan.

This sequence belongs to the glycosyl hydrolase 1 family.

It carries out the reaction Hydrolysis of terminal, non-reducing beta-D-glucosyl residues with release of beta-D-glucose.. This chain is Beta-glucosidase 29, found in Arabidopsis thaliana (Mouse-ear cress).